Here is a 230-residue protein sequence, read N- to C-terminus: 5'-methylthioadenosine/S-adenosylhomocysteine nucleosidase (230 aa).

The active-site Proton acceptor is glutamate 12. Residues glycine 78, methionine 153, and 174–175 (ME) each bind substrate. Catalysis depends on aspartate 198, which acts as the Proton donor.

Belongs to the PNP/UDP phosphorylase family. MtnN subfamily.

It carries out the reaction S-adenosyl-L-homocysteine + H2O = S-(5-deoxy-D-ribos-5-yl)-L-homocysteine + adenine. It catalyses the reaction S-methyl-5'-thioadenosine + H2O = 5-(methylsulfanyl)-D-ribose + adenine. The enzyme catalyses 5'-deoxyadenosine + H2O = 5-deoxy-D-ribose + adenine. It participates in amino-acid biosynthesis; L-methionine biosynthesis via salvage pathway; S-methyl-5-thio-alpha-D-ribose 1-phosphate from S-methyl-5'-thioadenosine (hydrolase route): step 1/2. Its function is as follows. Catalyzes the irreversible cleavage of the glycosidic bond in both 5'-methylthioadenosine (MTA) and S-adenosylhomocysteine (SAH/AdoHcy) to adenine and the corresponding thioribose, 5'-methylthioribose and S-ribosylhomocysteine, respectively. Also cleaves 5'-deoxyadenosine, a toxic by-product of radical S-adenosylmethionine (SAM) enzymes, into 5-deoxyribose and adenine. The protein is 5'-methylthioadenosine/S-adenosylhomocysteine nucleosidase of Aeromonas salmonicida (strain A449).